We begin with the raw amino-acid sequence, 65 residues long: Large ribosomal subunit protein bL35 (65 aa).

Belongs to the bacterial ribosomal protein bL35 family.

The sequence is that of Large ribosomal subunit protein bL35 from Stenotrophomonas maltophilia (strain R551-3).